The following is a 376-amino-acid chain: Chaperone protein DnaJ (376 aa).

Residues 5–70 enclose the J domain; the sequence is DYYEVLGVAR…EKRARYDRFG (66 aa). A CR-type zinc finger spans residues 137–215; that stretch reads GDEVTLRLPK…CKGSGQTQQV (79 aa). Zn(2+) is bound by residues Cys-150, Cys-153, Cys-167, Cys-170, Cys-189, Cys-192, Cys-203, and Cys-206. 4 CXXCXGXG motif repeats span residues 150–157, 167–174, 189–196, and 203–210; these read CDECGGSG, CRHCGGAG, CPVCRGEG, and CPKCKGSG.

This sequence belongs to the DnaJ family. In terms of assembly, homodimer. It depends on Zn(2+) as a cofactor.

The protein resides in the cytoplasm. Its function is as follows. Participates actively in the response to hyperosmotic and heat shock by preventing the aggregation of stress-denatured proteins and by disaggregating proteins, also in an autonomous, DnaK-independent fashion. Unfolded proteins bind initially to DnaJ; upon interaction with the DnaJ-bound protein, DnaK hydrolyzes its bound ATP, resulting in the formation of a stable complex. GrpE releases ADP from DnaK; ATP binding to DnaK triggers the release of the substrate protein, thus completing the reaction cycle. Several rounds of ATP-dependent interactions between DnaJ, DnaK and GrpE are required for fully efficient folding. Also involved, together with DnaK and GrpE, in the DNA replication of plasmids through activation of initiation proteins. This Nitratidesulfovibrio vulgaris (strain ATCC 29579 / DSM 644 / CCUG 34227 / NCIMB 8303 / VKM B-1760 / Hildenborough) (Desulfovibrio vulgaris) protein is Chaperone protein DnaJ.